Here is an 82-residue protein sequence, read N- to C-terminus: Nuclear protein 1 (82 aa).

Positions 1–82 (MATFPPATSA…SERKKRGARR (82 aa)) are disordered. Acidic residues predominate over residues 17 to 28 (PEDEDSSLDESD). Residues 65–82 (KLVTKLQNSERKKRGARR) carry the Nuclear localization signal motif.

Belongs to the NUPR family. Monomer. Directly interacts with MSL1 and binds MORF4L1, two components of histone acetyltransferase complex; the interaction with MORF4L1 may be mediated by MSL1. Interacts with EP300; this interaction enhances the effect of EP300 on PAX2 transcription factor activity. Interacts with PAXIP1; this interaction prevents PAXIP1 inhibition of PAX2 transcription factor activity. Interacts with COPS5; this interaction allows COPS5-dependent CDKN1B nuclear to cytoplasm translocation. Interacts with RNF2. Interacts with FOXO3; this interaction represses FOXO3 transactivation. Interacts with PTMA; negatively regulates apoptotic process. Interacts with MYOD1, EP300 and DDX5; this interaction coordinates the association of anti-proliferative and pro-myogenic proteins at the myogenin promoter. Interacts with TP53; interaction is stress-dependent. Forms a complex with EP300 and TP53; this complex binds CDKN1A promoter leading to transcriptional induction of CDKN1A. Phosphorylated in vitro by PKA and CK. Phosphorylation promotes DNA-binding activity. Post-translationally, acetylated by EP300 in vitro. Widely expressed, with high levels in liver, pancreas, prostate, ovary, colon, thyroid, spinal cord, trachea and adrenal gland, moderate levels in heart, placenta, lung, skeletal muscle, kidney, testis, small intestine, stomach and lymph node, and low levels in brain, spleen, thymus and bone marrow. Not detected in peripheral blood leukocytes.

The protein resides in the nucleus. Its subcellular location is the cytoplasm. It is found in the perinuclear region. Transcription regulator that converts stress signals into a program of gene expression that empowers cells with resistance to the stress induced by a change in their microenvironment. Thereby participates in the regulation of many processes namely cell-cycle, apoptosis, autophagy and DNA repair responses. Controls cell cycle progression and protects cells from genotoxic stress induced by doxorubicin through the complex formation with TP53 and EP300 that binds CDKN1A promoter leading to transcriptional induction of CDKN1A. Protects pancreatic cancer cells from stress-induced cell death by binding the RELB promoter and activating its transcription, leading to IER3 transactivation. Negatively regulates apoptosis through interaction with PTMA. Inhibits autophagy-induced apoptosis in cardiac cells through FOXO3 interaction, inducing cytoplasmic translocation of FOXO3 thereby preventing the FOXO3 association with the pro-autophagic BNIP3 promoter. Inhibits cell growth and facilitates programmed cell death by apoptosis after adriamycin-induced DNA damage through transactivation of TP53. Regulates methamphetamine-induced apoptosis and autophagy through DDIT3-mediated endoplasmic reticulum stress pathway. Participates in DNA repair following gamma-irradiation by facilitating DNA access of the transcription machinery through interaction with MSL1 leading to inhibition of histone H4' Lys-16' acetylation (H4K16ac). Coactivator of PAX2 transcription factor activity, both by recruiting EP300 to increase PAX2 transcription factor activity and by binding PAXIP1 to suppress PAXIP1-induced inhibition on PAX2. Positively regulates cell cycle progression through interaction with COPS5 inducing cytoplasmic translocation of CDKN1B leading to the CDKN1B degradation. Coordinates, through its interaction with EP300, the assiociation of MYOD1, EP300 and DDX5 to the MYOG promoter, leading to inhibition of cell-cycle progression and myogenic differentiation promotion. Negatively regulates beta cell proliferation via inhibition of cell-cycle regulatory genes expression through the suppression of their promoter activities. Also required for LHB expression and ovarian maturation. Exacerbates CNS inflammation and demyelination upon cuprizone treatment. In Homo sapiens (Human), this protein is Nuclear protein 1.